A 366-amino-acid polypeptide reads, in one-letter code: Leucine dehydrogenase (366 aa).

The active site involves K80. 180-186 (GVGHVAY) contacts NAD(+).

This sequence belongs to the Glu/Leu/Phe/Val dehydrogenases family. In terms of assembly, homooctamer.

The catalysed reaction is L-leucine + NAD(+) + H2O = 4-methyl-2-oxopentanoate + NH4(+) + NADH + H(+). It participates in amino-acid degradation; L-leucine degradation; 4-methyl-2-oxopentanoate from L-leucine (dehydrogenase route): step 1/1. With respect to regulation, inhibited by pyridoxal phosphate. Catalyzes the reversible deamination of L-leucine to 4-methyl-2-oxopentanoate. Exhibits the highest activity with L-leucine as substrate, but can also use other L-amino acids such as L-isoleucine, L-valine and L-2-aminovaleric acid. All of the oxo analogs of the amino acid substrates serve as good substrates for the reverse reaction. In Thermoactinomyces intermedius, this protein is Leucine dehydrogenase (ldh).